A 417-amino-acid chain; its full sequence is NADH-quinone oxidoreductase subunit D (417 aa).

The protein belongs to the complex I 49 kDa subunit family. As to quaternary structure, NDH-1 is composed of 14 different subunits. Subunits NuoB, C, D, E, F, and G constitute the peripheral sector of the complex.

Its subcellular location is the cell inner membrane. The enzyme catalyses a quinone + NADH + 5 H(+)(in) = a quinol + NAD(+) + 4 H(+)(out). Its function is as follows. NDH-1 shuttles electrons from NADH, via FMN and iron-sulfur (Fe-S) centers, to quinones in the respiratory chain. The immediate electron acceptor for the enzyme in this species is believed to be ubiquinone. Couples the redox reaction to proton translocation (for every two electrons transferred, four hydrogen ions are translocated across the cytoplasmic membrane), and thus conserves the redox energy in a proton gradient. The protein is NADH-quinone oxidoreductase subunit D of Aromatoleum aromaticum (strain DSM 19018 / LMG 30748 / EbN1) (Azoarcus sp. (strain EbN1)).